The primary structure comprises 718 residues: MAEFEKSISFDGRDIRLKVGLLAPQAGGSVLIESGDTAVLVTATRSPGREGIDFLPLTVDYEERLYAAGRIPGGIMRREGRPPEKTILTSRLIDRPLRPLFPSWLRDDLQVVALTMSMDEQVPPDVLAVTGASIATLIAKIPFNGPMAAVRVGLVGDDFIINPTYAEIEAGDLDLVVAGSPHGVIMVEAGANQLPERDIIEAIDFGYEAVRDLIKAQLDLVAELGLEIVQEAPPEVDQTLENYIRDRASDEIKKILAQFELTKPERDAALDVVKDNIATAIAELPEEDPIRLAATANSKALGNTFKDITKYFMRRQIVEDNVRVDGRKLDQVRPVSSQVGVLPKRVHGSGLFNRGLTQVLSACTLGTPGDAQNLNDDLQTDQSKRYLHHYNFPPFSVGETKPLRAPGRREIGHGALAERAILPVLPPKEQFPYVIRVVSEVLSSNGSTSMGSVCGSTLALMDAGVPILKPVSGAAMGLIKEGDEVRVLTDIQGIEDFLGDMDFKVAGTDAGITALQMDMKISGLSLEVIAQAIHQAKDARLHILDKMLQTIDQPRTETSPYAPRLLTIKIDPDMIGLVIGPGGKTIKGITEETGAKIDIEDDGTVTISAVDENKAKRARNIVQGMTRKLNEGDVYAGRVTRIIPIGAFVEFLPGKEGMIHISQLADYRVGKVEDEVAVGDEVIVKVREIDNKGRINLTRLGIHPDQAAAAREAAAVNR.

Mg(2+) contacts are provided by D496 and D502. The KH domain maps to 563-622; the sequence is PRLLTIKIDPDMIGLVIGPGGKTIKGITEETGAKIDIEDDGTVTISAVDENKAKRARNIV. The S1 motif domain occupies 632–700; the sequence is GDVYAGRVTR…NKGRINLTRL (69 aa).

May form homodimers or higher order multimers. Interacts with RNase E (rne). Mg(2+) serves as cofactor.

Its subcellular location is the cytoplasm. It carries out the reaction RNA(n+1) + phosphate = RNA(n) + a ribonucleoside 5'-diphosphate. Involved in mRNA degradation. Catalyzes the phosphorolysis of single-stranded polyribonucleotides processively in the 3'- to 5'-direction. The polypeptide is Polyribonucleotide nucleotidyltransferase (Nostoc sp. (strain PCC 7120 / SAG 25.82 / UTEX 2576)).